Consider the following 289-residue polypeptide: F-box protein PP2-B15 (289 aa).

The F-box domain occupies Met-1–Phe-43.

The chain is F-box protein PP2-B15 (PP2B15) from Arabidopsis thaliana (Mouse-ear cress).